We begin with the raw amino-acid sequence, 582 residues long: ATP-dependent lipid A-core flippase (582 aa).

The next 5 helical transmembrane spans lie at 16-36, 64-84, 153-173, 253-273, and 275-295; these read LWPT…ALIL, LMWM…TSYI, IIGL…ILIV, PIIQ…ASFP, and VMDS…IALM. Positions 28-310 constitute an ABC transmembrane type-1 domain; that stretch reads IVAGVALILN…LTNVNAQFQR (283 aa). An ABC transporter domain is found at 342–578; it reads VEFRNVTFTY…RGVYAQLHKM (237 aa). 376–383 contacts ATP; it reads GRSGSGKS.

The protein belongs to the ABC transporter superfamily. Lipid exporter (TC 3.A.1.106) family. As to quaternary structure, homodimer.

The protein resides in the cell inner membrane. It carries out the reaction ATP + H2O + lipid A-core oligosaccharideSide 1 = ADP + phosphate + lipid A-core oligosaccharideSide 2.. Functionally, involved in lipopolysaccharide (LPS) biosynthesis. Translocates lipid A-core from the inner to the outer leaflet of the inner membrane. Transmembrane domains (TMD) form a pore in the inner membrane and the ATP-binding domain (NBD) is responsible for energy generation. The chain is ATP-dependent lipid A-core flippase from Escherichia coli O6:K15:H31 (strain 536 / UPEC).